The chain runs to 417 residues: NADH-quinone oxidoreductase subunit D (417 aa).

This sequence belongs to the complex I 49 kDa subunit family. NDH-1 is composed of 14 different subunits. Subunits NuoB, C, D, E, F, and G constitute the peripheral sector of the complex.

The protein localises to the cell inner membrane. The enzyme catalyses a quinone + NADH + 5 H(+)(in) = a quinol + NAD(+) + 4 H(+)(out). In terms of biological role, NDH-1 shuttles electrons from NADH, via FMN and iron-sulfur (Fe-S) centers, to quinones in the respiratory chain. The immediate electron acceptor for the enzyme in this species is believed to be ubiquinone. Couples the redox reaction to proton translocation (for every two electrons transferred, four hydrogen ions are translocated across the cytoplasmic membrane), and thus conserves the redox energy in a proton gradient. In Coxiella burnetii (strain CbuG_Q212) (Coxiella burnetii (strain Q212)), this protein is NADH-quinone oxidoreductase subunit D.